We begin with the raw amino-acid sequence, 238 residues long: ATP-dependent dethiobiotin synthetase BioD (238 aa).

ATP is bound at residue 12 to 17; the sequence is EVGKTV. Residue T16 coordinates Mg(2+). K37 is an active-site residue. T41 is a substrate binding site. ATP is bound by residues D50, 109-112, 170-171, and 200-202; these read EGAG, GS, and PAG. Mg(2+)-binding residues include D50 and E109.

This sequence belongs to the dethiobiotin synthetase family. Homodimer. Mg(2+) serves as cofactor.

The protein localises to the cytoplasm. It carries out the reaction (7R,8S)-7,8-diammoniononanoate + CO2 + ATP = (4R,5S)-dethiobiotin + ADP + phosphate + 3 H(+). It participates in cofactor biosynthesis; biotin biosynthesis; biotin from 7,8-diaminononanoate: step 1/2. In terms of biological role, catalyzes a mechanistically unusual reaction, the ATP-dependent insertion of CO2 between the N7 and N8 nitrogen atoms of 7,8-diaminopelargonic acid (DAPA, also called 7,8-diammoniononanoate) to form a ureido ring. In Streptomyces avermitilis (strain ATCC 31267 / DSM 46492 / JCM 5070 / NBRC 14893 / NCIMB 12804 / NRRL 8165 / MA-4680), this protein is ATP-dependent dethiobiotin synthetase BioD.